We begin with the raw amino-acid sequence, 614 residues long: Afadin- and alpha-actinin-binding protein (614 aa).

Coiled-coil stretches lie at residues 131-227 (MDHL…IAMD) and 266-293 (RQKQ…SLLS). Residues serine 290, serine 293, and serine 312 each carry the phosphoserine modification. The interval 292-317 (LSPQKKKPRERVDDSTGTVISDVEED) is disordered. Residues 374 to 460 (ISRQDHEQET…RSFTEAAIRL (87 aa)) adopt a coiled-coil conformation. Serine 536, serine 540, and serine 542 each carry phosphoserine.

Belongs to the ADIP family. Interacts with afadin and alpha-actinin. Interacts with VAV2. Interacts with SSX2 and SSX3. Does not interact with SSX1 and SSX4. Interacts with PCM1. Interacts with WRAP73. Widely expressed, with the highest expression in brain, intermediate expression in kidney, testis, spinal cord, liver, heart, lung, skeletal muscle, ovary, fetal liver and fetal brain, and little to no expression in pancreas and spleen. All specific brain regions showed intermediate to high expression, with highest expression in amygdala. Also expressed in fetal tissues, mainly in liver and brain.

The protein resides in the cell junction. The protein localises to the adherens junction. It localises to the nucleus. It is found in the cytoplasm. Its subcellular location is the cytoskeleton. The protein resides in the microtubule organizing center. The protein localises to the centrosome. It localises to the centriolar satellite. It is found in the cilium basal body. Functionally, belongs to an adhesion system, which plays a role in the organization of homotypic, interneuronal and heterotypic cell-cell adherens junctions (AJs). May connect the nectin-afadin and E-cadherin-catenin system through alpha-actinin and may be involved in organization of the actin cytoskeleton at AJs through afadin and alpha-actinin. Involved in cell movement: localizes at the leading edge of moving cells in response to PDGF and is required for the formation of the leading edge and the promotion of cell movement, possibly via activation of Rac signaling. Acts as a centrosome maturation factor, probably by maintaining the integrity of the pericentriolar material and proper microtubule nucleation at mitotic spindle poles. The function seems to implicate at least in part WRAP73; the SSX2IP:WRAP73 complex is proposed to act as regulator of spindle anchoring at the mitotic centrosome. Involved in ciliogenesis. It is required for targeted recruitment of the BBSome, CEP290, RAB8, and SSTR3 to the cilia. This chain is Afadin- and alpha-actinin-binding protein (SSX2IP), found in Homo sapiens (Human).